An 855-amino-acid chain; its full sequence is E3 ubiquitin-protein ligase TRIM71 (855 aa).

A2 carries the post-translational modification N-acetylalanine. Residues 12-94 (CLLCKEMCGS…ALKLRCPVCD (83 aa)) form an RING-type zinc finger. A compositionally biased stretch (low complexity) spans 26–42 (SSNSSASSSSSQTSTSS). Disordered stretches follow at residues 26–48 (SSNS…GGGP) and 127–177 (EEPP…SPGS). Over residues 135–145 (RAGGGPGGAGG) the composition is skewed to gly residues. The span at 147–157 (SNHRHHAHHPA) shows a compositional bias: basic residues. The segment at 181–228 (RRPHGCSSCDEGNAASSRCLDCQEHLCDNCVRAHQRVRLTKDHYIERG) adopts a B box-type 1; atypical zinc-finger fold. The B box-type 2 zinc finger occupies 260–301 (ERLGFCQHHDDEVLHLYCDTCSVPICRECTLGRHGGHSFAYL). C265, H268, C288, and H293 together coordinate Zn(2+). 2 coiled-coil regions span residues 314–352 (QLLA…SEVK) and 378–411 (QVKA…VLEE). A Filamin repeat occupies 466 to 567 (SSGAFAPLTK…IENSPFKVVV (102 aa)). 6 NHL repeats span residues 580–623 (GLSF…FKPC), 627–670 (HHKF…FTFE), 674–717 (LLKF…FGPD), 721–764 (LNKY…IHPD), 768–811 (ARFL…FEAN), and 815–855 (LCKF…ILIF).

The protein belongs to the TRIM/RBCC family. As to quaternary structure, interacts (via NHL repeats) with AGO2; the interaction increases in presence of RNA. Interacts with HSP90AA1. Interacts (via NHL repeats) with MOV10, PABPC1, PUM1, PUM2, STAU2, XRN1 and XRN2 in an RNA-dependent manner. Interacts with SHCBP1; leading to enhance its stability. Post-translationally, autoubiquitinated. Highly expressed in undifferentiated embryonic stem cells (ESCs). Expressed in the epiblast and in interfollicular epidermal stem cells during early development. Also expressed in male germ cells and in the reproductive tract. Highly expressed in neuroepithelial cells, and its expression declines as neurogenesis proceeds (at protein level). Expressed in ependymal cells of the brain.

The protein localises to the cytoplasm. Its subcellular location is the P-body. It carries out the reaction S-ubiquitinyl-[E2 ubiquitin-conjugating enzyme]-L-cysteine + [acceptor protein]-L-lysine = [E2 ubiquitin-conjugating enzyme]-L-cysteine + N(6)-ubiquitinyl-[acceptor protein]-L-lysine.. It functions in the pathway protein modification; protein ubiquitination. E3 ubiquitin-protein ligase that cooperates with the microRNAs (miRNAs) machinery and promotes embryonic stem cells proliferation and maintenance. Binds to miRNAs and associates with AGO2, participating in post-transcriptional repression of transcripts such as CDKN1A. Facilitates the G1-S transition to promote rapid embryonic stem cell self-renewal by repressing CDKN1A expression. In addition, participates in post-transcriptional mRNA repression in a miRNA independent mechanism. Required to maintain proliferation and prevent premature differentiation of neural progenitor cells during early neural development: positively regulates FGF signaling by controlling the stability of SHCBP1. Specific regulator of miRNA biogenesis. miRNA Binds MIR29A hairpin and postranscriptionally modulates MIR29A levels, which indirectly regulates TET proteins expression. This is E3 ubiquitin-protein ligase TRIM71 (Trim71) from Mus musculus (Mouse).